We begin with the raw amino-acid sequence, 595 residues long: Phosphomethylpyrimidine synthase (595 aa).

Over residues 97–120 (GRDVRPEDNGFTKDDDPRAAREVF) the composition is skewed to basic and acidic residues. Residues 97–134 (GRDVRPEDNGFTKDDDPRAAREVFPRTSSHKPLRAKKG) are disordered. Positions 124–133 (SSHKPLRAKK) are enriched in basic residues. Substrate-binding positions include Asn202, Met231, Tyr260, His296, 316-318 (SRG), 357-360 (DGLR), and Glu396. Residue His400 participates in Zn(2+) binding. Tyr423 is a binding site for substrate. His464 is a Zn(2+) binding site. The [4Fe-4S] cluster site is built by Cys544, Cys547, and Cys552.

The protein belongs to the ThiC family. The cofactor is [4Fe-4S] cluster.

It catalyses the reaction 5-amino-1-(5-phospho-beta-D-ribosyl)imidazole + S-adenosyl-L-methionine = 4-amino-2-methyl-5-(phosphooxymethyl)pyrimidine + CO + 5'-deoxyadenosine + formate + L-methionine + 3 H(+). It functions in the pathway cofactor biosynthesis; thiamine diphosphate biosynthesis. Catalyzes the synthesis of the hydroxymethylpyrimidine phosphate (HMP-P) moiety of thiamine from aminoimidazole ribotide (AIR) in a radical S-adenosyl-L-methionine (SAM)-dependent reaction. This is Phosphomethylpyrimidine synthase from Halalkalibacterium halodurans (strain ATCC BAA-125 / DSM 18197 / FERM 7344 / JCM 9153 / C-125) (Bacillus halodurans).